The following is a 65-amino-acid chain: Large ribosomal subunit protein bL35 (65 aa).

The tract at residues 1–23 (MPKMKSNRGAAKRFKRTGSGKFK) is disordered. Over residues 10 to 23 (AAKRFKRTGSGKFK) the composition is skewed to basic residues.

The protein belongs to the bacterial ribosomal protein bL35 family.

The sequence is that of Large ribosomal subunit protein bL35 from Acidithiobacillus ferrooxidans (strain ATCC 53993 / BNL-5-31) (Leptospirillum ferrooxidans (ATCC 53993)).